The sequence spans 1486 residues: MIERGKFRSLTLINWNGFFARTFDLDELVTTLSGGNGAGKSTTMAAFVTALIPDLTLLHFRNTTEAGATSGSRDKGLHGKLKAGVCYSMLDTINSRHQRVVVGVRLQQVAGRDRKVDIKPFAIQGLPMSVQPTQLVTETLSERQARVLPLNELKDKLEAMEGVQFKQFNSITDYHSLMFDLGIIARRLRSASDRSKFYRLIEASLYGGISSAITRSLRDYLLPENSGVRKAFQDMEAALRENRMTLEAIRVTQSDRDLFKHLISEATNYVAADYMRHANERRVHLDKALEFRRELHTSRQQLAAEQYKHVDMARELAEHNGAEGDLEADYQAASDHLNLVQTALRQQEKIERYEADLDELQIRLEEQNEVVAEAIERQEENEARAEAAELEVDELKSQLADYQQALDVQQTRAIQYNQAIAALNRAKELCHLPDLTADSAAEWLETFQAKELEATEKMLSLEQKMSMAQTAHSQFEQAYQLVVAINGPLARNEAWDVARELLREGVDQRHLAEQVQPLRMRLSELEQRLREQQEAERLLADFCKRQGKNFDIDELEALHQELEARIASLSDSVSNAREERMTLRQEQEQLQSRIQSLMRRAPVWLAAQNSLNQLSEQCGEEFSSSQDVTEYLQQLLEREREAIVERDEVGARKNAVDEEIERLSQPGGSEDQRLNALAERFGGVLLSEIYDDVSLEDAPYFSALYGPSRHAIVVPDLSQVTEHLEGLTDCPEDLYLIEGDPQSFDDSVFSVDELEKAVVVKIADRQWRYSRFPEVPLFGRAARESRIESLHAEREVLSERFATLSFDVQKTQRLHQAFSRFIGSHLAVAFESDPEAEIRQLNSRRVELERALSNHENDNQQQRIQFEQAKEGVTALNRILPRLNLLADDSLADRVDEIRERLDEAQEAARFVQQFGNQLAKLEPIVSVLQSDPEQFEQLKEDYAYSQQMQRDARQQAFALTEVVQRRAHFSYSDSAEMLSGNSDLNEKLRERLEQAEAERTRAREALRGHAAQLSQYNQVLASLKSSYDTKKELLNDLQRELQDIGVRADSGAEERARIRRDELHAQLSNNRSRRNQLEKALTFCEAEMDNLTRKLRKLERDYFEMREQVVTAKAGWCAVMRMVKDNGVERRLHRRELAYLSADDLRSMSDKALGALRLAVADNEHLRDVLRMSEDPKRPERKIQFFVAVYQHLRERIRQDIIRTDDPVEAIEQMEIELSRLTEELTSREQKLAISSRSVANIIRKTIQREQNRIRMLNQGLQSVSFGQVNSVRLNVNVRETHAMLLDVLSEQHEQHQDLFNSNRLTFSEALAKLYQRLNPQIDMGQRTPQTIGEELLDYRNYLEMEVEVNRGSDGWLRAESGALSTGEAIGTGMSILVMVVQSWEDESRRLRGKDISPCRLLFLDEAARLDARSIATLFELCERLQMQLIIAAPENISPEKGTTYKLVRKVFQNTEHVHVVGLRGFAPQLPETLPGTDEAPSQAS.

34–41 provides a ligand contact to ATP; that stretch reads GGNGAGKS. Coiled-coil stretches lie at residues 326–418, 444–480, and 509–603; these read LEAD…QYNQ, LETF…QAYQ, and RHLA…RAPV. Residues 666-783 form a flexible hinge region; the sequence is PGGSEDQRLN…EVPLFGRAAR (118 aa). Coiled-coil stretches lie at residues 835–923, 977–1115, and 1209–1265; these read EAEI…AKLE, EMLS…TAKA, and VEAI…LQSV.

It belongs to the SMC family. MukB subfamily. Homodimerization via its hinge domain. Binds to DNA via its C-terminal region. Interacts, and probably forms a ternary complex, with MukE and MukF via its C-terminal region. The complex formation is stimulated by calcium or magnesium. Interacts with tubulin-related protein FtsZ.

It localises to the cytoplasm. The protein localises to the nucleoid. Its function is as follows. Plays a central role in chromosome condensation, segregation and cell cycle progression. Functions as a homodimer, which is essential for chromosome partition. Involved in negative DNA supercoiling in vivo, and by this means organize and compact chromosomes. May achieve or facilitate chromosome segregation by condensation DNA from both sides of a centrally located replisome during cell division. The sequence is that of Chromosome partition protein MukB from Escherichia coli O7:K1 (strain IAI39 / ExPEC).